A 401-amino-acid chain; its full sequence is Argininosuccinate synthase (401 aa).

ATP-binding positions include 7 to 15 (AYSGGLDTS) and A34. Residues Y85 and S90 each coordinate L-citrulline. G115 serves as a coordination point for ATP. L-aspartate contacts are provided by T117, N121, and D122. N121 is an L-citrulline binding site. 5 residues coordinate L-citrulline: R125, S174, S183, E259, and Y271.

It belongs to the argininosuccinate synthase family. Type 1 subfamily. As to quaternary structure, homotetramer.

The protein localises to the cytoplasm. It catalyses the reaction L-citrulline + L-aspartate + ATP = 2-(N(omega)-L-arginino)succinate + AMP + diphosphate + H(+). The protein operates within amino-acid biosynthesis; L-arginine biosynthesis; L-arginine from L-ornithine and carbamoyl phosphate: step 2/3. In Pelotomaculum thermopropionicum (strain DSM 13744 / JCM 10971 / SI), this protein is Argininosuccinate synthase.